The sequence spans 152 residues: Nucleoside diphosphate kinase (152 aa).

6 residues coordinate ATP: Lys-9, Phe-57, Arg-85, Thr-91, Arg-102, and Asn-112. His-115 (pros-phosphohistidine intermediate) is an active-site residue.

It belongs to the NDK family. As to quaternary structure, homotetramer. Requires Mg(2+) as cofactor.

Its subcellular location is the cytoplasm. The enzyme catalyses a 2'-deoxyribonucleoside 5'-diphosphate + ATP = a 2'-deoxyribonucleoside 5'-triphosphate + ADP. It carries out the reaction a ribonucleoside 5'-diphosphate + ATP = a ribonucleoside 5'-triphosphate + ADP. In terms of biological role, major role in the synthesis of nucleoside triphosphates other than ATP. The ATP gamma phosphate is transferred to the NDP beta phosphate via a ping-pong mechanism, using a phosphorylated active-site intermediate. The polypeptide is Nucleoside diphosphate kinase (Rhodopirellula baltica (strain DSM 10527 / NCIMB 13988 / SH1)).